The primary structure comprises 83 residues: Small ribosomal subunit protein bS20 (83 aa).

The protein belongs to the bacterial ribosomal protein bS20 family.

Functionally, binds directly to 16S ribosomal RNA. This Staphylococcus carnosus (strain TM300) protein is Small ribosomal subunit protein bS20.